A 177-amino-acid chain; its full sequence is Probable nicotinate-nucleotide adenylyltransferase (177 aa).

It belongs to the NadD family.

It carries out the reaction nicotinate beta-D-ribonucleotide + ATP + H(+) = deamido-NAD(+) + diphosphate. The protein operates within cofactor biosynthesis; NAD(+) biosynthesis; deamido-NAD(+) from nicotinate D-ribonucleotide: step 1/1. Functionally, catalyzes the reversible adenylation of nicotinate mononucleotide (NaMN) to nicotinic acid adenine dinucleotide (NaAD). This chain is Probable nicotinate-nucleotide adenylyltransferase, found in Nitratiruptor sp. (strain SB155-2).